A 180-amino-acid chain; its full sequence is dCTP deaminase (180 aa).

DCTP contacts are provided by residues 101–106 (KSSFAR) and Asp-117. The active-site Proton donor/acceptor is the Glu-127. Positions 159 and 168 each coordinate dCTP.

The protein belongs to the dCTP deaminase family. As to quaternary structure, homotrimer.

It carries out the reaction dCTP + H2O + H(+) = dUTP + NH4(+). It participates in pyrimidine metabolism; dUMP biosynthesis; dUMP from dCTP (dUTP route): step 1/2. In terms of biological role, catalyzes the deamination of dCTP to dUTP. This chain is dCTP deaminase, found in Ignicoccus hospitalis (strain KIN4/I / DSM 18386 / JCM 14125).